The following is a 604-amino-acid chain: Glutamine--fructose-6-phosphate aminotransferase [isomerizing] (604 aa).

Residue cysteine 2 is the Nucleophile; for GATase activity of the active site. One can recognise a Glutamine amidotransferase type-2 domain in the interval 2–218 (CGIVGVVGNR…DKELVILTKD (217 aa)). SIS domains follow at residues 284 to 423 (IITS…ANGK) and 456 to 594 (VQAL…VDKP). Catalysis depends on lysine 599, which acts as the For Fru-6P isomerization activity.

In terms of assembly, homodimer.

Its subcellular location is the cytoplasm. The enzyme catalyses D-fructose 6-phosphate + L-glutamine = D-glucosamine 6-phosphate + L-glutamate. Functionally, catalyzes the first step in hexosamine metabolism, converting fructose-6P into glucosamine-6P using glutamine as a nitrogen source. The polypeptide is Glutamine--fructose-6-phosphate aminotransferase [isomerizing] (Streptococcus pyogenes serotype M1).